The following is a 486-amino-acid chain: MEPYALTIHEARQLLDKKEISSVELTRSVFDRIERVEPKVGAYITLARESALSAAAAADTRLQSGGIAPLTGIPLAVKDLICTTGLRTTCASRMLETFMPPYDATVIEKLKTQGAVITGKVNMDEFAMGSSTEHSALGSTKNPWNLACIPGGSSGGSAASVAADMCLGSLGSDTGGSIRQPASHCGVVGIKPTYGRVSRYGLVAFASSLDQIGVLAKDVTDSALLLSAISGHDPSDSTSVPREVPDYAASCEKGLSGLTIGVCREYINAEGLDPEVADTVNRSIEHMKAQGAACVEVSLPHAQYAVAAYYVIAPAEASSNLARYDGVKYGFRDPEADSLLEMYARTRSRGFGKEVQRRIIIGTYCLSSGYYDAYYRKASQVRSLIADDFKKAFETCDVIVSPVAPTPAFELGAKTEDPLTMYLSDIFTLSANLAGVPGMSVPGGFSSTGLPIGVQLIAGHFNEPALVRCAWNLEQAVNIANKKPAL.

Catalysis depends on charge relay system residues lysine 78 and serine 153. Residue serine 177 is the Acyl-ester intermediate of the active site.

The protein belongs to the amidase family. GatA subfamily. Heterotrimer of A, B and C subunits.

It catalyses the reaction L-glutamyl-tRNA(Gln) + L-glutamine + ATP + H2O = L-glutaminyl-tRNA(Gln) + L-glutamate + ADP + phosphate + H(+). In terms of biological role, allows the formation of correctly charged Gln-tRNA(Gln) through the transamidation of misacylated Glu-tRNA(Gln) in organisms which lack glutaminyl-tRNA synthetase. The reaction takes place in the presence of glutamine and ATP through an activated gamma-phospho-Glu-tRNA(Gln). In Desulfosudis oleivorans (strain DSM 6200 / JCM 39069 / Hxd3) (Desulfococcus oleovorans), this protein is Glutamyl-tRNA(Gln) amidotransferase subunit A.